A 501-amino-acid polypeptide reads, in one-letter code: Phytoene desaturase (lycopene-forming) (501 aa).

Residue 12 to 45 participates in FAD binding; that stretch reads IVIGAGFGGLALAIRLQSAGIATTLVEARDKPGG.

It belongs to the carotenoid/retinoid oxidoreductase family. FAD is required as a cofactor.

It catalyses the reaction 15-cis-phytoene + 4 A = all-trans-lycopene + 4 AH2. It functions in the pathway carotenoid biosynthesis; astaxanthin biosynthesis. Its function is as follows. This enzyme converts phytoene into lycopene via the intermediaries of phytofluene, zeta-carotene and neurosporene by the introduction of four double bonds. This chain is Phytoene desaturase (lycopene-forming) (crtI), found in Paracoccus sp. (strain N81106 / MBIC 01143) (Agrobacterium aurantiacum).